A 157-amino-acid chain; its full sequence is 2-C-methyl-D-erythritol 2,4-cyclodiphosphate synthase (157 aa).

Residues aspartate 8 and histidine 10 each contribute to the a divalent metal cation site. 4-CDP-2-C-methyl-D-erythritol 2-phosphate-binding positions include 8 to 10 (DVH) and 34 to 35 (HS). Residue histidine 42 coordinates a divalent metal cation. 4-CDP-2-C-methyl-D-erythritol 2-phosphate is bound by residues 56–58 (DIG), 61–65 (FPDTD), 132–135 (TTEE), and phenylalanine 139.

This sequence belongs to the IspF family. As to quaternary structure, homotrimer. Requires a divalent metal cation as cofactor.

The enzyme catalyses 4-CDP-2-C-methyl-D-erythritol 2-phosphate = 2-C-methyl-D-erythritol 2,4-cyclic diphosphate + CMP. Its pathway is isoprenoid biosynthesis; isopentenyl diphosphate biosynthesis via DXP pathway; isopentenyl diphosphate from 1-deoxy-D-xylulose 5-phosphate: step 4/6. In terms of biological role, involved in the biosynthesis of isopentenyl diphosphate (IPP) and dimethylallyl diphosphate (DMAPP), two major building blocks of isoprenoid compounds. Catalyzes the conversion of 4-diphosphocytidyl-2-C-methyl-D-erythritol 2-phosphate (CDP-ME2P) to 2-C-methyl-D-erythritol 2,4-cyclodiphosphate (ME-CPP) with a corresponding release of cytidine 5-monophosphate (CMP). This is 2-C-methyl-D-erythritol 2,4-cyclodiphosphate synthase from Clostridium botulinum (strain Eklund 17B / Type B).